A 411-amino-acid polypeptide reads, in one-letter code: Tyrosine--tRNA ligase (411 aa).

Residue Tyr-34 coordinates L-tyrosine. A 'HIGH' region motif is present at residues 39–48 (CTATSLHIGS). L-tyrosine-binding residues include Tyr-171 and Gln-175. A 'KMSKS' region motif is present at residues 231 to 235 (KMGKT). Lys-234 serves as a coordination point for ATP. Positions 345–411 (ITAFELFHEA…GKKRHILVKI (67 aa)) constitute an S4 RNA-binding domain.

It belongs to the class-I aminoacyl-tRNA synthetase family. TyrS type 1 subfamily. In terms of assembly, homodimer.

It localises to the cytoplasm. It carries out the reaction tRNA(Tyr) + L-tyrosine + ATP = L-tyrosyl-tRNA(Tyr) + AMP + diphosphate + H(+). Its function is as follows. Catalyzes the attachment of tyrosine to tRNA(Tyr) in a two-step reaction: tyrosine is first activated by ATP to form Tyr-AMP and then transferred to the acceptor end of tRNA(Tyr). The polypeptide is Tyrosine--tRNA ligase (Rickettsia bellii (strain RML369-C)).